A 323-amino-acid chain; its full sequence is uncharacterized protein (323 aa).

Helical transmembrane passes span 232-252 and 267-287; these read LASY…FIVL and SLIV…GVIG.

This sequence belongs to the glycosyltransferase 2 family. GtrB subfamily.

The protein resides in the cell membrane. This is an uncharacterized protein from Bacillus subtilis (strain 168).